We begin with the raw amino-acid sequence, 312 residues long: Protein dif-1 (312 aa).

Solcar repeat units follow at residues 2–93 (SDVL…GKWL), 102–193 (MTFI…LKKK), and 203–289 (LSPG…TLAA). A run of 6 helical transmembrane segments spans residues 5–25 (LLNF…GHPF), 69–89 (MAAP…GCAV), 104–124 (FIQN…VMVP), 172–192 (TLLR…YLKK), 209–229 (LMAG…ADVL), and 261–282 (LFKG…CFFG).

It belongs to the mitochondrial carrier (TC 2.A.29) family.

It localises to the mitochondrion inner membrane. In terms of biological role, seems to play a role in the maintenance of tissue differentiation in the developing embryo, but not for its initiation. This is Protein dif-1 (dif-1) from Caenorhabditis elegans.